The primary structure comprises 336 residues: Galactinol synthase 6 (336 aa).

The active site involves lysine 106. Aspartate 122, aspartate 124, and histidine 260 together coordinate Mn(2+).

Belongs to the glycosyltransferase 8 family. Galactosyltransferase subfamily. A divalent metal cation is required as a cofactor.

Its subcellular location is the cytoplasm. It catalyses the reaction myo-inositol + UDP-alpha-D-galactose = alpha-D-galactosyl-(1-&gt;3)-1D-myo-inositol + UDP + H(+). In terms of biological role, galactinol synthase involved in the biosynthesis of raffinose family oligosaccharides (RFOs) that function as osmoprotectants. May promote plant stress tolerance. This is Galactinol synthase 6 (GOLS6) from Arabidopsis thaliana (Mouse-ear cress).